A 933-amino-acid chain; its full sequence is Progesterone receptor (933 aa).

An AF3; mediates transcriptional activation region spans residues 1–164 (MTELKAKGPR…PATQGVLSPL (164 aa)). The tract at residues 1–256 (MTELKAKGPR…AAAGGGAAAV (256 aa)) is disordered. The modulating, Pro-Rich stretch occupies residues 1–566 (MTELKAKGPR…YSFESLPQKI (566 aa)). Phosphoserine is present on serine 20. The LXXL motif 1 signature appears at 55–59 (LDGLL). The residue at position 81 (serine 81) is a Phosphoserine. The LXXL motif 2 motif lies at 115-119 (LDTLL). Residues serine 130 and serine 162 each carry the phosphoserine modification. The segment at 165-305 (MSRSGCKAGD…LATTMMDFIH (141 aa)) is mediates transcriptional transrepression. The Nuclear localization signal motif lies at 183 to 187 (KVLPR). Residues serine 190 and serine 213 each carry the phosphoserine modification. Acidic residues predominate over residues 220–231 (EVEEEDGSESEE). Residues 232 to 246 (SAGPLLKGKPRALGG) are compositionally biased toward low complexity. The residue at position 294 (serine 294) is a Phosphoserine; by MAPK1. Over residues 335–356 (AXSAFAPPRSSPSASSTPVAVG) the composition is skewed to low complexity. A disordered region spans residues 335–378 (AXSAFAPPRSSPSASSTPVAVGDFPDCAYPPDAEPKDDAYPLYS). Serine 345 carries the phosphoserine; by MAPK modification. A Glycyl lysine isopeptide (Lys-Gly) (interchain with G-Cter in SUMO); alternate cross-link involves residue lysine 388. Lysine 388 is covalently cross-linked (Glycyl lysine isopeptide (Lys-Gly) (interchain with G-Cter in ubiquitin); alternate). Serine 400 carries the phosphoserine; by CDK2 modification. Residues 415-452 (PDFPLGPPPPLPPRAPPSRPGEAAVTAAPASASVSSAS) are disordered. The segment covering 418 to 433 (PLGPPPPLPPRAPPSR) has biased composition (pro residues). A compositionally biased stretch (low complexity) spans 434–452 (PGEAAVTAAPASASVSSAS). The AF1; mediates transcriptional activation stretch occupies residues 456–546 (STLECILYKA…VYPPYLNYLR (91 aa)). A Glycyl lysine isopeptide (Lys-Gly) (interchain with G-Cter in SUMO) cross-link involves residue lysine 531. 2 NR C4-type zinc fingers span residues 567-587 (CLIC…CGSC) and 603-627 (CAGR…LRKC). The nuclear receptor DNA-binding region spans 567–639 (CLICGDEASG…AGMVLGGRKF (73 aa)). Position 676 is a phosphoserine (serine 676). Positions 679–913 (QDIQLIPPLI…EFPEMMSEVI (235 aa)) constitute an NR LBD domain. The interval 687–933 (LINLLMSIEP…MVKPLLFHKK (247 aa)) is AF2; mediates transcriptional activation. Arginine 766 is a progesterone binding site.

This sequence belongs to the nuclear hormone receptor family. In terms of assembly, interacts with SMARD1 and UNC45A. Interacts with CUEDC2; the interaction promotes ubiquitination, decreases sumoylation, and represses transcriptional activity. Interacts with PIAS3; the interaction promotes sumoylation of PR in a hormone-dependent manner, inhibits DNA-binding, and alters nuclear export. Interacts with SP1; the interaction requires ligand-induced phosphorylation on Ser-345 by ERK1/2-MAPK. Interacts with PRMT2. Interacts with NCOA2 and NCOA1. Interacts with KLF9. Interacts with GTF2B. In terms of processing, phosphorylated on multiple serine sites. Several of these sites are hormone-dependent. Phosphorylation on Ser-294 is highly hormone-dependent and modulates ubiquitination and sumoylation on Lys-388. Phosphorylation on Ser-102 and Ser-345 requires induction by hormone. Basal phosphorylation on Ser-81, Ser-162, Ser-190 and Ser-400 is increased in response to progesterone and can be phosphorylated in vitro by the CDK2-A1 complex. Increased levels of phosphorylation on Ser-400 also in the presence of EGF, heregulin, IGF, PMA and FBS. Phosphorylation at this site by CDK2 is ligand-independent, and increases nuclear translocation and transcriptional activity. Phosphorylation at Ser-162 and Ser-294, but not at Ser-190, is impaired during the G(2)/M phase of the cell cycle. Phosphorylation on Ser-345 by ERK1/2 MAPK is required for interaction with SP1. Post-translationally, sumoylation is hormone-dependent and represses transcriptional activity. Sumoylation on all three sites is enhanced by PIAS3. Desumoylated by SENP1. Sumoylation on Lys-388, the main site of sumoylation, is repressed by ubiquitination on the same site, and modulated by phosphorylation at Ser-294. Ubiquitination is hormone-dependent and represses sumoylation on the same site. Promoted by MAPK-mediated phosphorylation on Ser-294. Ubiquitinated by UBR5, leading to its degradation: UBR5 specifically recognizes and binds ligand-bound PGR when it is not associated with coactivators (NCOAs). In presence of NCOAs, the UBR5-degron is not accessible, preventing its ubiquitination and degradation. In terms of processing, palmitoylated by ZDHHC7 and ZDHHC21. Palmitoylation is required for plasma membrane targeting and for rapid intracellular signaling via ERK and AKT kinases and cAMP generation.

The protein resides in the nucleus. It is found in the cytoplasm. Functionally, the steroid hormones and their receptors are involved in the regulation of eukaryotic gene expression and affect cellular proliferation and differentiation in target tissues. Transcriptional activator of several progesteron-dependent promoters in a variety of cell types. Involved in activation of SRC-dependent MAPK signaling on hormone stimulation. This Pan troglodytes (Chimpanzee) protein is Progesterone receptor (PGR).